We begin with the raw amino-acid sequence, 148 residues long: uncharacterized protein (148 aa).

The segment covering methionine 1–serine 17 has biased composition (polar residues). The interval methionine 1–arginine 148 is disordered. Composition is skewed to basic and acidic residues over residues glutamate 36–proline 47 and lysine 58–arginine 67. Phosphoserine is present on residues serine 100 and serine 107. Basic residues predominate over residues valine 128–arginine 148.

This is an uncharacterized protein from Arabidopsis thaliana (Mouse-ear cress).